Reading from the N-terminus, the 242-residue chain is Aliphatic sulfonates import ATP-binding protein SsuB 1 (242 aa).

The ABC transporter domain maps to 11–227 (VAVRRLSRAF…RPSHPDFEDL (217 aa)). 43–50 (GESGSGKT) provides a ligand contact to ATP.

The protein belongs to the ABC transporter superfamily. Aliphatic sulfonates importer (TC 3.A.1.17.2) family. As to quaternary structure, the complex is composed of two ATP-binding proteins (SsuB), two transmembrane proteins (SsuC) and a solute-binding protein (SsuA).

It localises to the cell inner membrane. It carries out the reaction ATP + H2O + aliphatic sulfonate-[sulfonate-binding protein]Side 1 = ADP + phosphate + aliphatic sulfonateSide 2 + [sulfonate-binding protein]Side 1.. Functionally, part of the ABC transporter complex SsuABC involved in aliphatic sulfonates import. Responsible for energy coupling to the transport system. The polypeptide is Aliphatic sulfonates import ATP-binding protein SsuB 1 (Paracoccus denitrificans (strain Pd 1222)).